The following is a 204-amino-acid chain: Acyl-homoserine-lactone synthase (204 aa).

The protein belongs to the autoinducer synthase family.

It catalyses the reaction a fatty acyl-[ACP] + S-adenosyl-L-methionine = an N-acyl-L-homoserine lactone + S-methyl-5'-thioadenosine + holo-[ACP] + H(+). Functionally, required for the synthesis of acyl-HSL autoinducers that bind to SolR. The polypeptide is Acyl-homoserine-lactone synthase (solI) (Ralstonia solanacearum (Pseudomonas solanacearum)).